The chain runs to 199 residues: MSNYQLEWVSPKQLRPHEDVILSIVNENIEILRKDNSMAPIIVDKNSMVILDGHHRYYASLSLGLPKIPAIMIDYNSEQVEVREWNRIIAPDSSIRDFLRVFRSSVDGKYCVSYKSDVVFCDDNIYSLYWKEEAIEQLLSRMGYNVVKTADQEATISIPPVPKNVVIDFSYKGLRFPPKSTRHIYHFYIPKQRIILQWD.

Belongs to the ParB family.

Its function is as follows. Probably part of a 4-gene DNA damage response locus in which the upstream ups system, in combination with this downstream locus, functions in homologous recombination to rescue Sulfolobales from DNA-damaging threats. This protein might function in the DNA transfer machinery. In Sulfolobus acidocaldarius (strain ATCC 33909 / DSM 639 / JCM 8929 / NBRC 15157 / NCIMB 11770), this protein is ParB-like protein Saci_1498.